We begin with the raw amino-acid sequence, 95 residues long: Mitochondrial import inner membrane translocase subunit Tim9 (95 aa).

The short motif at 35 to 59 is the Twin CX3C motif element; sequence CFTDCIRDFTTRDVKDSEEKCSLNC. Intrachain disulfides connect Cys-35–Cys-59 and Cys-39–Cys-55.

This sequence belongs to the small Tim family. As to quaternary structure, heterohexamer; composed of 3 copies of Tim9 and 3 copies of Tim10, named soluble 70 kDa complex. The complex associates with the Tim22 component of the TIM22 complex. Interacts with multi-pass transmembrane proteins in transit.

Its subcellular location is the mitochondrion inner membrane. Mitochondrial intermembrane chaperone that participates in the import and insertion of multi-pass transmembrane proteins into the mitochondrial inner membrane. May also be required for the transfer of beta-barrel precursors from the TOM complex to the sorting and assembly machinery (SAM complex) of the outer membrane. Acts as a chaperone-like protein that protects the hydrophobic precursors from aggregation and guide them through the mitochondrial intermembrane space. This is Mitochondrial import inner membrane translocase subunit Tim9 (Tim9a) from Drosophila melanogaster (Fruit fly).